Reading from the N-terminus, the 362-residue chain is Molybdenum import ATP-binding protein ModC (362 aa).

One can recognise an ABC transporter domain in the interval 2 to 236 (ASPIEVRLQM…LDLPLAMGSD (235 aa)). An ATP-binding site is contributed by 34 to 41 (GPSGSGKT). In terms of domain architecture, Mop spans 297-362 (QSSILNRLPV…AQIKAVAVLA (66 aa)).

Belongs to the ABC transporter superfamily. Molybdate importer (TC 3.A.1.8) family. The complex is composed of two ATP-binding proteins (ModC), two transmembrane proteins (ModB) and a solute-binding protein (ModA).

Its subcellular location is the cell inner membrane. It catalyses the reaction molybdate(out) + ATP + H2O = molybdate(in) + ADP + phosphate + H(+). Its function is as follows. Part of the ABC transporter complex ModABC involved in molybdenum import. Responsible for energy coupling to the transport system. The protein is Molybdenum import ATP-binding protein ModC of Pseudomonas syringae pv. syringae (strain B728a).